The sequence spans 254 residues: Protein Thf1 (254 aa).

Positions 183–217 form a coiled coil; that stretch reads SDKLQKDLDLYRSNLEKMEQARITMEEAIQADRRK. A compositionally biased stretch (basic and acidic residues) spans 213-227; that stretch reads ADRRKREQREQEKLA. A disordered region spans residues 213–254; that stretch reads ADRRKREQREQEKLAKAAAAEAPAALEASSDNPEPETSETPS. Low complexity predominate over residues 228-240; sequence KAAAAEAPAALEA. Positions 245 to 254 are enriched in acidic residues; that stretch reads PEPETSETPS.

This sequence belongs to the THF1 family.

Its function is as follows. May be involved in photosynthetic membrane biogenesis. This chain is Protein Thf1, found in Synechococcus elongatus (strain ATCC 33912 / PCC 7942 / FACHB-805) (Anacystis nidulans R2).